A 61-amino-acid chain; its full sequence is MATKNRTIIKKYADRWHKEACHLYAKWLNAKRQGDEEAANYYFSKYITAGDNWINYTKFAH.

This is an uncharacterized protein from Haemophilus influenzae (Bacteriophage HP1).